The sequence spans 314 residues: tRNA-cytidine(32) 2-sulfurtransferase (314 aa).

The PP-loop motif signature appears at 39 to 44 (SGGKDS). [4Fe-4S] cluster is bound by residues Cys114, Cys117, and Cys205.

Belongs to the TtcA family. In terms of assembly, homodimer. Requires Mg(2+) as cofactor. [4Fe-4S] cluster serves as cofactor.

Its subcellular location is the cytoplasm. The catalysed reaction is cytidine(32) in tRNA + S-sulfanyl-L-cysteinyl-[cysteine desulfurase] + AH2 + ATP = 2-thiocytidine(32) in tRNA + L-cysteinyl-[cysteine desulfurase] + A + AMP + diphosphate + H(+). It participates in tRNA modification. Functionally, catalyzes the ATP-dependent 2-thiolation of cytidine in position 32 of tRNA, to form 2-thiocytidine (s(2)C32). The sulfur atoms are provided by the cysteine/cysteine desulfurase (IscS) system. In Cupriavidus necator (strain ATCC 17699 / DSM 428 / KCTC 22496 / NCIMB 10442 / H16 / Stanier 337) (Ralstonia eutropha), this protein is tRNA-cytidine(32) 2-sulfurtransferase.